A 474-amino-acid chain; its full sequence is tRNA-2-methylthio-N(6)-dimethylallyladenosine synthase (474 aa).

Residues 3–120 enclose the MTTase N-terminal domain; it reads KKLYIKTFGC…LPQMISTRQI (118 aa). 6 residues coordinate [4Fe-4S] cluster: Cys12, Cys49, Cys83, Cys157, Cys161, and Cys164. In terms of domain architecture, Radical SAM core spans 143–382; it reads RTEGVTAFVS…ELQAQAISVR (240 aa). The TRAM domain occupies 381 to 444; it reads VRMVGTTQRV…SHTLRGENVR (64 aa).

The protein belongs to the methylthiotransferase family. MiaB subfamily. In terms of assembly, monomer. Requires [4Fe-4S] cluster as cofactor.

The protein resides in the cytoplasm. It carries out the reaction N(6)-dimethylallyladenosine(37) in tRNA + (sulfur carrier)-SH + AH2 + 2 S-adenosyl-L-methionine = 2-methylsulfanyl-N(6)-dimethylallyladenosine(37) in tRNA + (sulfur carrier)-H + 5'-deoxyadenosine + L-methionine + A + S-adenosyl-L-homocysteine + 2 H(+). In terms of biological role, catalyzes the methylthiolation of N6-(dimethylallyl)adenosine (i(6)A), leading to the formation of 2-methylthio-N6-(dimethylallyl)adenosine (ms(2)i(6)A) at position 37 in tRNAs that read codons beginning with uridine. The protein is tRNA-2-methylthio-N(6)-dimethylallyladenosine synthase of Nitrosospira multiformis (strain ATCC 25196 / NCIMB 11849 / C 71).